A 310-amino-acid chain; its full sequence is Glycine-rich RNA-binding protein RZ1C (310 aa).

The RRM domain maps to 7–85; sequence SRIFVGGLSP…RVISVNRAEP (79 aa). The residue at position 15 (serine 15) is a Phosphoserine. The interval 82–120 is disordered; sequence RAEPKLGRDDGESHGSRGGRDSGYSIAGKGSFGGGGGGG. Basic and acidic residues predominate over residues 83–101; that stretch reads AEPKLGRDDGESHGSRGGR. Over residues 111-120 the composition is skewed to gly residues; that stretch reads GSFGGGGGGG. The CCHC-type zinc-finger motif lies at 128–143; that stretch reads CFKCGRVGHWARDCPS. The interval 224-310 is disordered; it reads RFAGGDRYSR…YPSSSTFDRY (87 aa). Basic and acidic residues-rich tracts occupy residues 226 to 236 and 244 to 253; these read AGGDRYSRGSD and DKARSFERDI. Positions 261–273 are enriched in gly residues; the sequence is RYGGGRAGGPIRG. A Phosphoserine modification is found at serine 295.

In terms of tissue distribution, expressed in roots, rosette and cauline leaves, stems, floral buds and flowers.

The protein resides in the nucleus. Functionally, binds RNA and DNA sequences non-specifically. May be involved in tolerance to cold stress. This chain is Glycine-rich RNA-binding protein RZ1C, found in Arabidopsis thaliana (Mouse-ear cress).